The following is a 461-amino-acid chain: Bifunctional protein GlmU (461 aa).

The segment at 1-227 is pyrophosphorylase; it reads MEVIALILAA…PDEVLGVNDR (227 aa). UDP-N-acetyl-alpha-D-glucosamine contacts are provided by residues 8 to 11, K22, Q73, 78 to 79, 100 to 102, G137, E152, N167, and N225; these read LAAG, GT, and YGD. D102 is a Mg(2+) binding site. N225 contributes to the Mg(2+) binding site. Positions 228-248 are linker; the sequence is RQLAELERIYQVHQARALMER. An N-acetyltransferase region spans residues 249–461; that stretch reads GVTLRDPARF…EKARKESCAE (213 aa). 2 residues coordinate UDP-N-acetyl-alpha-D-glucosamine: R332 and K350. Residue H362 is the Proton acceptor of the active site. Y365 and N376 together coordinate UDP-N-acetyl-alpha-D-glucosamine. Acetyl-CoA contacts are provided by residues A379, 385 to 386, S404, A422, and R439; that span reads NY.

In the N-terminal section; belongs to the N-acetylglucosamine-1-phosphate uridyltransferase family. The protein in the C-terminal section; belongs to the transferase hexapeptide repeat family. As to quaternary structure, homotrimer. The cofactor is Mg(2+).

The protein resides in the cytoplasm. It catalyses the reaction alpha-D-glucosamine 1-phosphate + acetyl-CoA = N-acetyl-alpha-D-glucosamine 1-phosphate + CoA + H(+). The enzyme catalyses N-acetyl-alpha-D-glucosamine 1-phosphate + UTP + H(+) = UDP-N-acetyl-alpha-D-glucosamine + diphosphate. It participates in nucleotide-sugar biosynthesis; UDP-N-acetyl-alpha-D-glucosamine biosynthesis; N-acetyl-alpha-D-glucosamine 1-phosphate from alpha-D-glucosamine 6-phosphate (route II): step 2/2. The protein operates within nucleotide-sugar biosynthesis; UDP-N-acetyl-alpha-D-glucosamine biosynthesis; UDP-N-acetyl-alpha-D-glucosamine from N-acetyl-alpha-D-glucosamine 1-phosphate: step 1/1. It functions in the pathway bacterial outer membrane biogenesis; LPS lipid A biosynthesis. Functionally, catalyzes the last two sequential reactions in the de novo biosynthetic pathway for UDP-N-acetylglucosamine (UDP-GlcNAc). The C-terminal domain catalyzes the transfer of acetyl group from acetyl coenzyme A to glucosamine-1-phosphate (GlcN-1-P) to produce N-acetylglucosamine-1-phosphate (GlcNAc-1-P), which is converted into UDP-GlcNAc by the transfer of uridine 5-monophosphate (from uridine 5-triphosphate), a reaction catalyzed by the N-terminal domain. The chain is Bifunctional protein GlmU from Methylococcus capsulatus (strain ATCC 33009 / NCIMB 11132 / Bath).